The sequence spans 431 residues: Glutamate-1-semialdehyde 2,1-aminomutase (431 aa).

Residue K265 is modified to N6-(pyridoxal phosphate)lysine.

This sequence belongs to the class-III pyridoxal-phosphate-dependent aminotransferase family. HemL subfamily. In terms of assembly, homodimer. Requires pyridoxal 5'-phosphate as cofactor.

It localises to the cytoplasm. The catalysed reaction is (S)-4-amino-5-oxopentanoate = 5-aminolevulinate. It participates in porphyrin-containing compound metabolism; protoporphyrin-IX biosynthesis; 5-aminolevulinate from L-glutamyl-tRNA(Glu): step 2/2. This Aliivibrio salmonicida (strain LFI1238) (Vibrio salmonicida (strain LFI1238)) protein is Glutamate-1-semialdehyde 2,1-aminomutase.